The primary structure comprises 2214 residues: Multifunctional protein URA2 (2214 aa).

Ala2 carries the post-translational modification N-acetylalanine. A GATase (Glutamine amidotransferase) region spans residues Ala2 to Phe400. The L-glutamine site is built by Ser64, Gly273, and Gly275. The 186-residue stretch at Arg228–Thr413 folds into the Glutamine amidotransferase type-1 domain. Cys302 functions as the Nucleophile; for GATase activity in the catalytic mechanism. Leu303, Gln306, Asn344, Gly346, and Phe347 together coordinate L-glutamine. Active-site for GATase activity residues include His386 and Glu388. Residues Asp401–Lys440 are linker. Residues Lys440–His980 form a CPSase A region. The CPSase (Carbamoyl phosphate synthase) stretch occupies residues Lys440–Ile1482. Arg558, Arg598, Gly604, Gly605, Lys635, Met637, Glu642, Gly668, Ile669, His670, Gln711, and Glu725 together coordinate ATP. ATP-grasp domains follow at residues Ser562 to Leu754 and Ser1099 to Met1290. Positions 711, 725, and 727 each coordinate Mg(2+). Mn(2+)-binding residues include Gln711, Glu725, and Asn727. The segment at Gly981–Ile1482 is CPSase B. The ATP site is built by Arg1135, Lys1174, Ile1176, Glu1181, Gly1206, Val1207, His1208, Ser1209, Gln1249, and Glu1261. Mg(2+) contacts are provided by Gln1249, Glu1261, and Asn1263. Residues Gln1249, Glu1261, and Asn1263 each contribute to the Mn(2+) site. The MGS-like domain maps to Phe1356–Pro1508. A linker region spans residues Glu1483–Asp1492. The tract at residues Val1493–Gly1821 is defective DHOase domain. Residues Glu1822 to Arg1909 are linker. Lys1853 participates in a covalent cross-link: Glycyl lysine isopeptide (Lys-Gly) (interchain with G-Cter in ubiquitin). Ser1857 carries the phosphoserine; by PKA modification. Residues Gly1910 to Met2214 are ATCase (Aspartate transcarbamylase). Positions 1962 and 1963 each coordinate carbamoyl phosphate. Lys1990 contacts L-aspartate. Carbamoyl phosphate is bound by residues Arg2011, His2039, and Gln2042. Positions 2072 and 2134 each coordinate L-aspartate. Positions 2173 and 2174 each coordinate carbamoyl phosphate.

The protein in the N-terminal section; belongs to the CarA family. In the 2nd section; belongs to the CarB family. It in the 3rd section; belongs to the metallo-dependent hydrolases superfamily. DHOase family. CAD subfamily. This sequence in the C-terminal section; belongs to the aspartate/ornithine carbamoyltransferase superfamily. ATCase family. Mg(2+) is required as a cofactor. Mn(2+) serves as cofactor.

The protein localises to the cytoplasm. It carries out the reaction hydrogencarbonate + L-glutamine + 2 ATP + H2O = carbamoyl phosphate + L-glutamate + 2 ADP + phosphate + 2 H(+). The enzyme catalyses L-glutamine + H2O = L-glutamate + NH4(+). The catalysed reaction is hydrogencarbonate + NH4(+) + 2 ATP = carbamoyl phosphate + 2 ADP + phosphate + 2 H(+). It catalyses the reaction carbamoyl phosphate + L-aspartate = N-carbamoyl-L-aspartate + phosphate + H(+). It functions in the pathway pyrimidine metabolism; UMP biosynthesis via de novo pathway; (S)-dihydroorotate from bicarbonate: step 1/3. It participates in pyrimidine metabolism; UMP biosynthesis via de novo pathway; (S)-dihydroorotate from bicarbonate: step 2/3. Both CPSase and ATCase activities are feedback inhibited by the end product UTP. Its function is as follows. Multifunctional protein that encodes the first 2 enzymatic activities of the de novo pyrimidine pathway: carbamoylphosphate synthetase (CPSase; EC 6.3.5.5) and aspartate transcarbamylase (ATCase; EC 2.1.3.2). The CPSase-function is accomplished in 2 steps, by a glutamine-dependent amidotransferase activity (GATase) that binds and cleaves glutamine to produce ammonia, followed by an ammonium-dependent carbamoyl phosphate synthetase, which reacts with the ammonia, hydrogencarbonate and ATP to form carbamoyl phosphate. The endogenously produced carbamoyl phosphate is sequestered and channeled to the ATCase active site. ATCase then catalyzes the formation of carbamoyl-L-aspartate from L-aspartate and carbamoyl phosphate. This Saccharomyces cerevisiae (strain ATCC 204508 / S288c) (Baker's yeast) protein is Multifunctional protein URA2 (URA2).